The primary structure comprises 466 residues: L-seryl-tRNA(Sec) selenium transferase (466 aa).

An N6-(pyridoxal phosphate)lysine modification is found at K294.

It belongs to the SelA family. The cofactor is pyridoxal 5'-phosphate.

The protein localises to the cytoplasm. It carries out the reaction L-seryl-tRNA(Sec) + selenophosphate + H(+) = L-selenocysteinyl-tRNA(Sec) + phosphate. The protein operates within aminoacyl-tRNA biosynthesis; selenocysteinyl-tRNA(Sec) biosynthesis; selenocysteinyl-tRNA(Sec) from L-seryl-tRNA(Sec) (bacterial route): step 1/1. Functionally, converts seryl-tRNA(Sec) to selenocysteinyl-tRNA(Sec) required for selenoprotein biosynthesis. The protein is L-seryl-tRNA(Sec) selenium transferase of Carboxydothermus hydrogenoformans (strain ATCC BAA-161 / DSM 6008 / Z-2901).